The following is a 576-amino-acid chain: Sulfite reductase [NADPH] hemoprotein beta-component (576 aa).

[4Fe-4S] cluster-binding residues include C435, C441, C480, and C484. A siroheme-binding site is contributed by C484.

It belongs to the nitrite and sulfite reductase 4Fe-4S domain family. As to quaternary structure, alpha(8)-beta(8). The alpha component is a flavoprotein, the beta component is a hemoprotein. The cofactor is siroheme. [4Fe-4S] cluster is required as a cofactor.

The catalysed reaction is hydrogen sulfide + 3 NADP(+) + 3 H2O = sulfite + 3 NADPH + 4 H(+). Its pathway is sulfur metabolism; hydrogen sulfide biosynthesis; hydrogen sulfide from sulfite (NADPH route): step 1/1. Functionally, component of the sulfite reductase complex that catalyzes the 6-electron reduction of sulfite to sulfide. This is one of several activities required for the biosynthesis of L-cysteine from sulfate. In Yersinia pseudotuberculosis serotype IB (strain PB1/+), this protein is Sulfite reductase [NADPH] hemoprotein beta-component.